The sequence spans 294 residues: Ribosomal RNA small subunit methyltransferase H (294 aa).

S-adenosyl-L-methionine contacts are provided by residues 36 to 38 (GGH), Asp55, Phe82, Asp97, and Gln104.

It belongs to the methyltransferase superfamily. RsmH family.

The protein localises to the cytoplasm. The enzyme catalyses cytidine(1402) in 16S rRNA + S-adenosyl-L-methionine = N(4)-methylcytidine(1402) in 16S rRNA + S-adenosyl-L-homocysteine + H(+). Functionally, specifically methylates the N4 position of cytidine in position 1402 (C1402) of 16S rRNA. This chain is Ribosomal RNA small subunit methyltransferase H, found in Synechococcus sp. (strain CC9605).